We begin with the raw amino-acid sequence, 365 residues long: G-protein coupled receptor 4 (365 aa).

Residues 1–10 are Extracellular-facing; sequence MDNSTGTWEG. Asparagine 3 carries an N-linked (GlcNAc...) asparagine glycan. Residues 11–47 traverse the membrane as a helical segment; it reads CHVDSRVDHLFPPSLYIFVIGVGLPTNCLALWAAYRQ. Cystine bridges form between cysteine 11-cysteine 260 and cysteine 92-cysteine 170. At 48 to 51 the chain is on the cytoplasmic side; that stretch reads VRQR. The chain crosses the membrane as a helical span at residues 52-82; that stretch reads NELGVYLMNLSIADLLYICTLPLWVDYFLHH. The Extracellular segment spans residues 83–87; that stretch reads DNWIH. Residues 88-123 traverse the membrane as a helical segment; the sequence is GPGSCKLFGFIFYSNIYISIAFLCCISVDRYLAVAH. Over 124 to 131 the chain is Cytoplasmic; the sequence is PLRFARLR. A helical transmembrane segment spans residues 132–158; that stretch reads RVKTAVAVSSVVWATELGANSAPLFHD. Residues 159 to 174 are Extracellular-facing; the sequence is ELFRDRYNHTFCFEKF. An extracellular loop 2 (ECL2) region spans residues 159 to 174; the sequence is ELFRDRYNHTFCFEKF. An N-linked (GlcNAc...) asparagine glycan is attached at asparagine 166. Residues 175–212 traverse the membrane as a helical segment; the sequence is PMERWVAWMNLYRVFVGFLFPWALMLLCYRGILRAVQS. Topologically, residues 213 to 216 are cytoplasmic; the sequence is SVST. Residues 217 to 252 form a helical membrane-spanning segment; the sequence is ERQEKVKIKRLALSLIAIVLVCFAPYHALLLSRSAV. Topologically, residues 253–262 are extracellular; sequence YLGRPWDCGF. A helical membrane pass occupies residues 263–291; the sequence is EERVFSAYHSSLAFTSLNCVADPILYCLV. At 292–365 the chain is on the cytoplasmic side; that stretch reads NEGARSDVAK…PLKVLLPPAQ (74 aa).

The protein belongs to the G-protein coupled receptor 1 family.

The protein localises to the cell membrane. Activated by a network of residues that connects an extracellular-facing cavity to Glu-147, a conserved charged residue buried in the transmembrane core of the receptor. Protonation likely drives conformational changes in extracellular loop 2 (ECL2), which stabilizes movement of transmembrane 3 (TM3) and a series of rearrangements that connect the extracellular-facing cavity to Glu-147, a residue only conserved in proton-sensing G-protein coupled receptors. Functionally, proton-sensing G-protein coupled receptor activated by extracellular pH, which is required to monitor pH changes and generate adaptive reactions. Activated by an optimal pH of 6.8-7.2. Ligand binding causes a conformation change that triggers signaling via guanine nucleotide-binding proteins (G proteins) and modulates the activity of downstream effectors, such as adenylate cyclase. GPR4 is mainly coupled to G(s) G proteins and mediates activation of adenylate cyclase activity. May also couple with G(q) and G(12)/G(13) G proteins. Acts as a key regulator of respiratory sensitivity to CO2/H(+) in brain retrotrapezoid nucleus neurons: acts by mediating detection of protons generated by the formation of carbonic acid in the blood, an important mechanism to impulse to breathe. Also acts as a regulator of acid secretion in the kidney collecting duct by maintaining acid-base homeostasis in the kidney. Acidosis-induced GPR4 activation increases paracellular gap formation and permeability of vascular endothelial cells, possibly through the G(12)/G(13)/Rho GTPase signaling pathway. In Rattus norvegicus (Rat), this protein is G-protein coupled receptor 4.